The sequence spans 505 residues: Photosystem II CP47 reaction center protein (505 aa).

At 1–19 the chain is on the cytoplasmic side; that stretch reads GLPWYRVHTVLINDPGRLI. Residues His-8, His-22, His-25, His-99, and His-113 each contribute to the chlorophyll a site. Residues 20–35 form a helical membrane-spanning segment; sequence AAHLMHTALVAGWAGS. Over 36-99 the chain is Lumenal; sequence MALYELATFD…WSFEGVALAH (64 aa). Residues 100–114 traverse the membrane as a helical segment; that stretch reads IVLSGLLFLAACWHW. The Cytoplasmic segment spans residues 115-138; it reads VYWDLELFRDPRTGEPALDLPKMF. Residues 139–155 form a helical membrane-spanning segment; the sequence is GIHLFLAGLLCFGFGAF. His-141, His-156, His-200, His-201, and His-215 together coordinate chlorophyll a. Topologically, residues 156–201 are lumenal; sequence HLTGLFGPGMWVSDPYGLTGSVQPVAPEWGPDGFNPYNPGGVVAHH. A helical transmembrane segment spans residues 202 to 217; it reads IAAGIVGIIAGLFHIL. Over 218–235 the chain is Cytoplasmic; the sequence is VRPPQRLYKALRMGNIET. Residues 236-251 traverse the membrane as a helical segment; the sequence is VLSSSIAAVFFAAFVV. Over 252 to 455 the chain is Lumenal; that stretch reads AGTMWYGSAT…PRGWFTFAHA (204 aa). Chlorophyll a contacts are provided by His-454, His-465, and His-468. The chain crosses the membrane as a helical span at residues 456-471; the sequence is VFALLFFFGHIWHGAR. Topologically, residues 472-505 are cytoplasmic; that stretch reads TLFRDVFSGIDPELSPEQVEWGFYQKVGDVTTRK.

The protein belongs to the PsbB/PsbC family. PsbB subfamily. PSII is composed of 1 copy each of membrane proteins PsbA, PsbB, PsbC, PsbD, PsbE, PsbF, PsbH, PsbI, PsbJ, PsbK, PsbL, PsbM, PsbT, PsbX, PsbY, PsbZ, Psb30/Ycf12, peripheral proteins PsbO, CyanoQ (PsbQ), PsbU, PsbV and a large number of cofactors. It forms dimeric complexes. Requires Binds multiple chlorophylls. PSII binds additional chlorophylls, carotenoids and specific lipids. as cofactor.

Its subcellular location is the cellular thylakoid membrane. In terms of biological role, one of the components of the core complex of photosystem II (PSII). It binds chlorophyll and helps catalyze the primary light-induced photochemical processes of PSII. PSII is a light-driven water:plastoquinone oxidoreductase, using light energy to abstract electrons from H(2)O, generating O(2) and a proton gradient subsequently used for ATP formation. This Thermostichus vulcanus (Synechococcus vulcanus) protein is Photosystem II CP47 reaction center protein.